A 436-amino-acid chain; its full sequence is MSTGFFGDIQKIKYEGPDSTNPLAFRHYQPDEIVLGKRMEDHLRFAVAYWHTFTWPGGDPFGGQTFLRPWFEDTMKAAKLKADVAFEFFSLLGAPYYCFHDADVRPEGRNFAENTKNLNEIVDYFAEKQAATGTKLLWGTANLFSNRRYMSGAATNPDPDVFAFAAATVKTCIDATQKLGGENYVLWGGREGYETLLNTDLKRELDQLGRFLNLVVEYKHKIGFKGTILIEPKPQEPTKHQYDYDVATVYGFLKKHGVENEVKVNIEQGHAILAGHSFEHELALANALGIFGSIDMNRNDYQSGWDTDQFPNNVPEMALAYYHVLAGGGFKTGGTNFDAKLRRQSLDPADLLIGHIGGMDCCARGLKAAAKMIEDKALSQPLADRYAGWESAEAQKLFRGEYSLDEITNWVESHDVNPQPKSGKQELLENVVNRYV.

Catalysis depends on residues His-100 and Asp-103. Mg(2+) contacts are provided by Glu-231, Glu-267, His-270, Asp-295, Asp-306, Asp-308, and Asp-338.

It belongs to the xylose isomerase family. Homotetramer. Mg(2+) is required as a cofactor.

It localises to the cytoplasm. It carries out the reaction alpha-D-xylose = alpha-D-xylulofuranose. This chain is Xylose isomerase, found in Rhizobium etli (strain CIAT 652).